The primary structure comprises 1131 residues: Replication factor C subunit 1 (1131 aa).

Disordered regions lie at residues 14-87 (KKPV…KSEK), 92-111 (YKPG…ETDE), 120-201 (AASK…NDEA), and 225-378 (ARTL…NYQA). Over residues 38-54 (GVKEAKVNNSGKEDASK) the composition is skewed to basic and acidic residues. Lys-49 participates in a covalent cross-link: Glycyl lysine isopeptide (Lys-Gly) (interchain with G-Cter in SUMO2). Tyr-66 carries the post-translational modification Phosphotyrosine. Ser-68, Ser-70, Ser-72, and Ser-107 each carry phosphoserine. Thr-109 is modified (phosphothreonine). A compositionally biased stretch (polar residues) spans 127-138 (NGVSTNSYLGTS). Ser-155 is modified (phosphoserine). 2 positions are modified to phosphothreonine: Thr-160 and Thr-162. Phosphoserine occurs at positions 163, 172, 189, 244, 250, 253, 281, and 309. Positions 184–201 (KRKESSQNTEDSRLNDEA) are enriched in basic and acidic residues. Residues 308 to 319 (SSPKASAKLALM) are compositionally biased toward low complexity. Basic and acidic residues-rich tracts occupy residues 334 to 350 (AARR…EKTT) and 359 to 373 (TKRE…EKKR). The segment at 354 to 528 (TKVSPTKRES…KKESESKKCK (175 aa)) is interferon-stimulated-response-element binding region. Ser-365 is modified (phosphoserine). Residues 399-489 (GAENCLEGLT…PGKRSKYEMA (91 aa)) form the BRCT domain. The segment at 491–525 (EAEMKKEKSKLERTPQKNDQGKRKISPAKKESESK) is disordered. Position 535 is a phosphoserine (Ser-535). Residue 635 to 642 (GPPGVGKT) participates in ATP binding. The tract at residues 1073 to 1131 (PALDSEYSEEFQEDDTQSEKEQDAVETDAMIKKKTRSSKPSKSEREKESKKGKGKNWKK) is disordered. Acidic residues predominate over residues 1078-1088 (EYSEEFQEDDT). Ser-1090 is modified (phosphoserine). Positions 1104-1108 (KKKTR) match the Nuclear localization signal motif. Basic and acidic residues predominate over residues 1113–1123 (SKSEREKESKK).

This sequence belongs to the activator 1 large subunit family. Large subunit of the RFC complex, an heteropentameric complex consisting of RFC1 and four small subunits RFC2, RFC3, RFC4 and RFC5; the RFC complex interacts with PCNA and the interaction involves RFC1.

It localises to the nucleus. Subunit of the replication factor C (RFC) complex which acts during elongation of primed DNA templates by DNA polymerases delta and epsilon, and is necessary for ATP-dependent loading of proliferating cell nuclear antigen (PCNA) onto primed DNA. This subunit binds to the primer-template junction. Binds the PO-B transcription element as well as other GA rich DNA sequences. Can bind single- or double-stranded DNA. This chain is Replication factor C subunit 1 (Rfc1), found in Mus musculus (Mouse).